The chain runs to 173 residues: Photosystem I assembly protein Ycf3 (173 aa).

TPR repeat units follow at residues 35-68 (AFSY…EEDP), 72-105 (SYIL…NFKL), and 120-153 (GVQA…APDN).

It belongs to the Ycf3 family.

The protein resides in the plastid. The protein localises to the chloroplast thylakoid membrane. In terms of biological role, essential for the assembly of the photosystem I (PSI) complex. May act as a chaperone-like factor to guide the assembly of the PSI subunits. This is Photosystem I assembly protein Ycf3 from Porphyra purpurea (Red seaweed).